A 347-amino-acid chain; its full sequence is NADH-ubiquinone oxidoreductase chain 2 (347 aa).

Helical transmembrane passes span 1–21, 25–45, 59–79, 96–116, 123–143, 153–173, 178–198, 200–220, 239–259, 278–298, and 325–345; these read MNPL…IITM, HWLT…PLIM, YFLI…INFM, TIIL…FWVP, LLST…SILY, IILA…LNQT, IMAY…IYNP, LMLL…TILI, ILMM…PLSG, ISLT…RLIY, and FLPT…MMFI.

Belongs to the complex I subunit 2 family. As to quaternary structure, core subunit of respiratory chain NADH dehydrogenase (Complex I) which is composed of 45 different subunits. Interacts with TMEM242.

The protein resides in the mitochondrion inner membrane. The enzyme catalyses a ubiquinone + NADH + 5 H(+)(in) = a ubiquinol + NAD(+) + 4 H(+)(out). Its function is as follows. Core subunit of the mitochondrial membrane respiratory chain NADH dehydrogenase (Complex I) that is believed to belong to the minimal assembly required for catalysis. Complex I functions in the transfer of electrons from NADH to the respiratory chain. The immediate electron acceptor for the enzyme is believed to be ubiquinone. This Oryzorictes hova (Hova rice tenrec) protein is NADH-ubiquinone oxidoreductase chain 2.